A 255-amino-acid chain; its full sequence is MASPGAGRAPPELPERNCGYREVEYWDQRYQGAADSAPYDWFGDFSSFRALLEPELRPEDRILVLGCGNSALSYELFLGGFPNVTSVDYSSVVVAAMQARHAHVPQLRWETMDVRKLDFPSASFDVVLEKGTLDALLAGERDPWTVSSEGVHTVDQVLSEVSRVLVPGGRFISMTSAAPHFRTRHYAQAYYGWSLRHATYGSGFHFHLYLMHKGGKLSVAQLALGAQILSPPRPPTSPCFLQDSDHEDFLSAIQL.

Residues Trp-26 and Tyr-30 each coordinate S-adenosyl-L-methionine. At Tyr-39 the chain carries Phosphotyrosine. Residues Trp-41, Gly-66, 88–89, 113–114, and Lys-130 contribute to the S-adenosyl-L-methionine site; these read DY and DV. The Required for methyltransferase activity motif lies at 129–134; sequence EKGTLD.

It belongs to the methyltransferase superfamily.

The enzyme catalyses L-lysyl-[protein] + S-adenosyl-L-methionine = N(6)-methyl-L-lysyl-[protein] + S-adenosyl-L-homocysteine + H(+). It catalyses the reaction N(6)-methyl-L-lysyl-[protein] + S-adenosyl-L-methionine = N(6),N(6)-dimethyl-L-lysyl-[protein] + S-adenosyl-L-homocysteine + H(+). It carries out the reaction N(6),N(6)-dimethyl-L-lysyl-[protein] + S-adenosyl-L-methionine = N(6),N(6),N(6)-trimethyl-L-lysyl-[protein] + S-adenosyl-L-homocysteine + H(+). In terms of biological role, protein-lysine methyltransferase that efficiently catalyzes three successive methylations on 'Lys-36' in eukaryotic translation elongation factor 1 alpha (EEF1A1 or EEF1A2). This chain is EEF1A lysine methyltransferase 4, found in Homo sapiens (Human).